Here is a 295-residue protein sequence, read N- to C-terminus: Protease HtpX homolog (295 aa).

A run of 2 helical transmembrane segments spans residues 6–26 (IGLF…VTSV) and 40–60 (LSSL…VSLL). Histidine 148 serves as a coordination point for Zn(2+). Glutamate 149 is an active-site residue. Zn(2+) is bound at residue histidine 152. A run of 2 helical transmembrane segments spans residues 163–183 (LIQG…SYAL) and 198–218 (IANI…VAYF). Glutamate 223 is a binding site for Zn(2+).

It belongs to the peptidase M48B family. It depends on Zn(2+) as a cofactor.

It is found in the cell inner membrane. The protein is Protease HtpX homolog of Leptospira interrogans serogroup Icterohaemorrhagiae serovar copenhageni (strain Fiocruz L1-130).